The following is a 602-amino-acid chain: Spermidine-citrate ligase (602 aa).

Residues Ser-286–Arg-288, Lys-300, and Arg-312 contribute to the ATP site.

The protein belongs to the IucA/IucC family.

It carries out the reaction spermidine + citrate + ATP = N(8)-citryl-spermidine + AMP + diphosphate + H(+). It participates in siderophore biosynthesis; petrobactin biosynthesis. Functionally, involved in the biosynthesis of petrobactin, a catecholate siderophore that functions in both iron acquisition and virulence. Catalyzes the ATP-dependent condensation of citric acid and spermidine to form N(8)-citryl-spermidine. It can also catalyze the condensation of several di- and triamine analogs of spermidine with citric acid and the condensation of the citric acid analog tricarballylic acid with spermidine. Required for growth in iron-depleted medium and for full virulence in a mouse model of infection. This Bacillus anthracis protein is Spermidine-citrate ligase.